The primary structure comprises 167 residues: 6,7-dimethyl-8-ribityllumazine synthase (167 aa).

5-amino-6-(D-ribitylamino)uracil contacts are provided by residues F26, 60–62 (AFE), and 89–91 (AII). 94–95 (ET) serves as a coordination point for (2S)-2-hydroxy-3-oxobutyl phosphate. The Proton donor role is filled by H97. A 5-amino-6-(D-ribitylamino)uracil-binding site is contributed by F122. R136 contributes to the (2S)-2-hydroxy-3-oxobutyl phosphate binding site.

It belongs to the DMRL synthase family. Forms an icosahedral capsid composed of 60 subunits, arranged as a dodecamer of pentamers.

The enzyme catalyses (2S)-2-hydroxy-3-oxobutyl phosphate + 5-amino-6-(D-ribitylamino)uracil = 6,7-dimethyl-8-(1-D-ribityl)lumazine + phosphate + 2 H2O + H(+). Its pathway is cofactor biosynthesis; riboflavin biosynthesis; riboflavin from 2-hydroxy-3-oxobutyl phosphate and 5-amino-6-(D-ribitylamino)uracil: step 1/2. Functionally, catalyzes the formation of 6,7-dimethyl-8-ribityllumazine by condensation of 5-amino-6-(D-ribitylamino)uracil with 3,4-dihydroxy-2-butanone 4-phosphate. This is the penultimate step in the biosynthesis of riboflavin. This Ruthia magnifica subsp. Calyptogena magnifica protein is 6,7-dimethyl-8-ribityllumazine synthase.